The following is a 113-amino-acid chain: Large ribosomal subunit protein uL24 (113 aa).

This sequence belongs to the universal ribosomal protein uL24 family. In terms of assembly, part of the 50S ribosomal subunit.

One of two assembly initiator proteins, it binds directly to the 5'-end of the 23S rRNA, where it nucleates assembly of the 50S subunit. Its function is as follows. One of the proteins that surrounds the polypeptide exit tunnel on the outside of the subunit. The polypeptide is Large ribosomal subunit protein uL24 (Chlamydia felis (strain Fe/C-56) (Chlamydophila felis)).